We begin with the raw amino-acid sequence, 159 residues long: METKETESSVELRHIVRIYNTDLDGKKQVQMALTGIKGVGRRLARVFAVKAGVDPCATLGKLPEEQIEALKNVIESVRDNIPAWMMNRRKDIITGVDKHVMGAEVLTTLREDLDIMKKTRSYKGIRHELGLRVRGQRTRSTGRSGATVGVTRKKTQAKK.

The disordered stretch occupies residues 136 to 159; that stretch reads QRTRSTGRSGATVGVTRKKTQAKK. Low complexity predominate over residues 138-149; sequence TRSTGRSGATVG.

Belongs to the universal ribosomal protein uS13 family. Part of the 30S ribosomal subunit. Forms a loose heterodimer with protein S19. Forms two bridges to the 50S subunit in the 70S ribosome.

Functionally, located at the top of the head of the 30S subunit, it contacts several helices of the 16S rRNA. In the 70S ribosome it contacts the 23S rRNA (bridge B1a) and protein L5 of the 50S subunit (bridge B1b), connecting the 2 subunits; these bridges are implicated in subunit movement. This is Small ribosomal subunit protein uS13 from Methanothrix thermoacetophila (strain DSM 6194 / JCM 14653 / NBRC 101360 / PT) (Methanosaeta thermophila).